The sequence spans 879 residues: Valine--tRNA ligase (879 aa).

Residues 45 to 55 (PNVTGKLHLGH) carry the 'HIGH' region motif. Residues 521–525 (KMSKS) carry the 'KMSKS' region motif. Lys524 is a binding site for ATP. Residues 806–879 (LTELVNVDEE…ERIQDLKESK (74 aa)) are a coiled coil.

The protein belongs to the class-I aminoacyl-tRNA synthetase family. ValS type 1 subfamily. In terms of assembly, monomer.

Its subcellular location is the cytoplasm. The catalysed reaction is tRNA(Val) + L-valine + ATP = L-valyl-tRNA(Val) + AMP + diphosphate. Its function is as follows. Catalyzes the attachment of valine to tRNA(Val). As ValRS can inadvertently accommodate and process structurally similar amino acids such as threonine, to avoid such errors, it has a 'posttransfer' editing activity that hydrolyzes mischarged Thr-tRNA(Val) in a tRNA-dependent manner. This Lactobacillus acidophilus (strain ATCC 700396 / NCK56 / N2 / NCFM) protein is Valine--tRNA ligase.